The primary structure comprises 425 residues: Putative E3 ubiquitin-protein ligase UBR7 (425 aa).

The UBR-type zinc-finger motif lies at 44 to 116 (EKCSYSQGSV…KNLECKLFPD (73 aa)). The PHD-type; atypical zinc finger occupies 132–188 (GLYCVCKRPYPDPEDEVPDEMIQCVVCEDWFHGRHLGAIPPESGDFQEMVCQACMRR). Residues 212 to 269 (LPNATGMGDEDVSKPENGAPQDNGLKEDAPEHGRDSVNEVKAEQKNEPCSSSSSESDL) are disordered. Glycyl lysine isopeptide (Lys-Gly) (interchain with G-Cter in SUMO2) cross-links involve residues K225 and K252. Over residues 235–257 (GLKEDAPEHGRDSVNEVKAEQKN) the composition is skewed to basic and acidic residues. S264 bears the Phosphoserine mark. Glycyl lysine isopeptide (Lys-Gly) (interchain with G-Cter in SUMO2) cross-links involve residues K274 and K398.

As to expression, expressed in testis and sperm (at protein level).

It carries out the reaction S-ubiquitinyl-[E2 ubiquitin-conjugating enzyme]-L-cysteine + [acceptor protein]-L-lysine = [E2 ubiquitin-conjugating enzyme]-L-cysteine + N(6)-ubiquitinyl-[acceptor protein]-L-lysine.. Its pathway is protein modification; protein ubiquitination. In terms of biological role, E3 ubiquitin-protein ligase which is a component of the N-end rule pathway. Recognizes and binds to proteins bearing specific N-terminal residues that are destabilizing according to the N-end rule, leading to their ubiquitination and subsequent degradation. The sequence is that of Putative E3 ubiquitin-protein ligase UBR7 (Ubr7) from Mus musculus (Mouse).